Here is a 114-residue protein sequence, read N- to C-terminus: Pole-localizer protein TmaR (114 aa).

Residues 70-111 (RDDYESRVDDYTIRNAELSKQRREASTKMKEQKKAHAELLKN) adopt a coiled-coil conformation. The disordered stretch occupies residues 89 to 114 (KQRREASTKMKEQKKAHAELLKNAEK).

The protein belongs to the pole-localizer TmaR family.

The protein resides in the cytoplasm. Its function is as follows. Pole-localizer protein involved in the regulation of several cellular processes. This chain is Pole-localizer protein TmaR, found in Haemophilus influenzae (strain 86-028NP).